The chain runs to 497 residues: Probable small intestine urate exporter (497 aa).

Asparagine 47, asparagine 56, asparagine 66, asparagine 75, and asparagine 90 each carry an N-linked (GlcNAc...) asparagine glycan. The next 10 membrane-spanning stretches (helical) occupy residues 149 to 169 (SFLT…LIVL), 171 to 191 (IVQG…WVKW), 203 to 223 (IAGS…GLLC), 230 to 250 (YVFY…FPLI), 292 to 312 (LPLW…YTIM), 332 to 352 (ILSA…GLLA), 368 to 388 (KLFT…LPWV), 398 to 418 (FLVL…VNFL), 431 to 451 (LLQV…GFFI), and 461 to 481 (NVFL…LIFG).

Belongs to the major facilitator superfamily. Sodium/anion cotransporter family. As to expression, abundantly expressed in pancreas, liver, colon and small intestine, less in kidney. Not detected in the adrenal glands, brain, placenta, heart, testis, skeletal muscle, and lungs.

The protein resides in the apical cell membrane. It catalyses the reaction 3 Na(+)(out) + phosphate(out) = 3 Na(+)(in) + phosphate(in). It carries out the reaction urate(out) + n chloride(in) = urate(in) + n chloride(out). The catalysed reaction is L-thyroxine(out) = L-thyroxine(in). The enzyme catalyses 3,3',5-triiodo-L-thyronine(out) = 3,3',5-triiodo-L-thyronine(in). Acts as a membrane potential-dependent organic anion transporter, the transport requires a low concentration of chloride ions. Mediates chloride-dependent transport of urate. Mediates sodium-independent high affinity transport of thyroid hormones including L-thyroxine (T4) and 3,3',5-triiodo-L-thyronine (T3). Can actively transport inorganic phosphate into cells via Na(+) cotransport. This Homo sapiens (Human) protein is Probable small intestine urate exporter (SLC17A4).